Reading from the N-terminus, the 238-residue chain is Ribitol-5-phosphate cytidylyltransferase 2 (238 aa).

CTP is bound by residues 7–10 (LAGG) and 81–87 (GTDRNET).

It belongs to the IspD/TarI cytidylyltransferase family. TarI subfamily.

The enzyme catalyses D-ribitol 5-phosphate + CTP + H(+) = CDP-L-ribitol + diphosphate. It participates in cell wall biogenesis; poly(ribitol phosphate) teichoic acid biosynthesis. Functionally, catalyzes the transfer of the cytidylyl group of CTP to D-ribitol 5-phosphate. This chain is Ribitol-5-phosphate cytidylyltransferase 2, found in Staphylococcus aureus (strain MSSA476).